A 206-amino-acid chain; its full sequence is Sclerostin domain-containing protein 1 (206 aa).

Positions 1–23 (MLPPAIHLSLIPLLCILMKNCLA) are cleaved as a signal peptide. The interval 42–62 (AHPSSNSTLNQARNGGRHFSS) is disordered. Residues 43–62 (HPSSNSTLNQARNGGRHFSS) show a composition bias toward polar residues. The N-linked (GlcNAc...) asparagine glycan is linked to asparagine 47. 4 disulfide bridges follow: cysteine 75-cysteine 133, cysteine 89-cysteine 147, cysteine 100-cysteine 163, and cysteine 104-cysteine 165. The 96-residue stretch at 75–170 (CRELRSTKYI…TACKCKRYTR (96 aa)) folds into the CTCK domain. N-linked (GlcNAc...) asparagine glycosylation occurs at asparagine 173. The disordered stretch occupies residues 176–206 (SHNFESVSPAKPAQHHRERKRASKSSKHSLS). The span at 188–206 (AQHHRERKRASKSSKHSLS) shows a compositional bias: basic residues.

This sequence belongs to the sclerostin family. As to quaternary structure, interacts with BMP2, BMP4, BMP6 and BMP7 with high affinity. As to expression, highly expressed within the maximally sensitized/receptive endometrium. Weakly expressed in brain, kidney and the female reproductive tract. Expressed in the dermal papilla (DP) and at high level in the precortex of both anagen vibrissae and pelage follicles. Dynymic expression during the hair cycle.

The protein localises to the secreted. Functionally, directly antagonizes activity of BMP2, BMP4, BMP6 and BMP7 in a dose-dependent manner. May be involved in the onset of endometrial receptivity for implantation/sensitization for the decidual cell reaction. Enhances Wnt signaling and inhibits TGF-beta signaling. The chain is Sclerostin domain-containing protein 1 (Sostdc1) from Rattus norvegicus (Rat).